We begin with the raw amino-acid sequence, 352 residues long: Peptide chain release factor 1 (352 aa).

Glutamine 229 bears the N5-methylglutamine mark.

This sequence belongs to the prokaryotic/mitochondrial release factor family. Post-translationally, methylated by PrmC. Methylation increases the termination efficiency of RF1.

It localises to the cytoplasm. Functionally, peptide chain release factor 1 directs the termination of translation in response to the peptide chain termination codons UAG and UAA. The sequence is that of Peptide chain release factor 1 from Granulibacter bethesdensis (strain ATCC BAA-1260 / CGDNIH1).